A 159-amino-acid chain; its full sequence is NAD(P)H-quinone oxidoreductase subunit J, chloroplastic (159 aa).

Belongs to the complex I 30 kDa subunit family. In terms of assembly, NDH is composed of at least 16 different subunits, 5 of which are encoded in the nucleus.

It is found in the plastid. It localises to the chloroplast thylakoid membrane. The catalysed reaction is a plastoquinone + NADH + (n+1) H(+)(in) = a plastoquinol + NAD(+) + n H(+)(out). The enzyme catalyses a plastoquinone + NADPH + (n+1) H(+)(in) = a plastoquinol + NADP(+) + n H(+)(out). NDH shuttles electrons from NAD(P)H:plastoquinone, via FMN and iron-sulfur (Fe-S) centers, to quinones in the photosynthetic chain and possibly in a chloroplast respiratory chain. The immediate electron acceptor for the enzyme in this species is believed to be plastoquinone. Couples the redox reaction to proton translocation, and thus conserves the redox energy in a proton gradient. In Oryza nivara (Indian wild rice), this protein is NAD(P)H-quinone oxidoreductase subunit J, chloroplastic.